We begin with the raw amino-acid sequence, 448 residues long: Probable metal transport system membrane protein CPn_0347/CP_0413/CPj0347/CpB0354 (448 aa).

A run of 8 helical transmembrane segments spans residues 15–35, 47–67, 69–89, 100–120, 144–164, 193–213, 233–253, and 270–290; these read FLAV…LLIS, ASYP…SLQA, IFWI…IIVF, SALC…ASYV, FLEA…LWWW, LIFI…VLIS, ILIL…YISV, and LPTG…CLLF.

The protein belongs to the ABC-3 integral membrane protein family.

Its subcellular location is the cell inner membrane. Part of an ATP-driven transport system CPn_0346/CPn_0347/CPn_0348/CPn_0349 for a metal. The sequence is that of Probable metal transport system membrane protein CPn_0347/CP_0413/CPj0347/CpB0354 from Chlamydia pneumoniae (Chlamydophila pneumoniae).